The following is a 186-amino-acid chain: Large ribosomal subunit protein uL5 (186 aa).

It belongs to the universal ribosomal protein uL5 family. In terms of assembly, part of the 50S ribosomal subunit; part of the 5S rRNA/L5/L18/L25 subcomplex. Contacts the 5S rRNA and the P site tRNA. Forms a bridge to the 30S subunit in the 70S ribosome.

This is one of the proteins that bind and probably mediate the attachment of the 5S RNA into the large ribosomal subunit, where it forms part of the central protuberance. In the 70S ribosome it contacts protein S13 of the 30S subunit (bridge B1b), connecting the 2 subunits; this bridge is implicated in subunit movement. Contacts the P site tRNA; the 5S rRNA and some of its associated proteins might help stabilize positioning of ribosome-bound tRNAs. In Karelsulcia muelleri (strain GWSS) (Sulcia muelleri), this protein is Large ribosomal subunit protein uL5.